The sequence spans 1113 residues: Sterol regulatory element binding protein sbp-1 (1113 aa).

Residues 1-52 (MNEEFEGDVPMSDPFLSLVTKLDDIAPFPNNDPLDFDMEHNWQEPGPSQQPD) form a transcriptional activation (acidic) region. Disordered regions lie at residues 24–68 (DIAP…EYYD), 101–132 (LGGG…TSPP), 206–274 (SPYD…SPQN), and 290–345 (EVER…SQGT). A compositionally biased stretch (basic residues) spans 229–238 (PHHHHHHPMP). Over residues 324 to 337 (AEGDEDEDDEDSDS) the composition is skewed to acidic residues. Residues 355 to 368 (ERRTAHNLIEKKYR) form a basic motif region. A bHLH domain is found at 355–405 (ERRTAHNLIEKKYRCSINDRIQQLKVLLCGDEAKLSKSATLRRAIEHIEEV). Residues 369–405 (CSINDRIQQLKVLLCGDEAKLSKSATLRRAIEHIEEV) are helix-loop-helix motif. Residues 395 to 422 (LRRAIEHIEEVEHENQVLKHHVEQMRKT) adopt a coiled-coil conformation. A disordered region spans residues 437–472 (TEYSARSPVESSPSPPRNERKRSRMSTTTPMKNGTR). Helical transmembrane passes span 478-498 (VTLF…LLAG) and 541-561 (MSYV…KLLI).

In terms of processing, processed in the Golgi apparatus, releasing the protein from the membrane. Ubiquitinated; the nuclear form has a rapid turnover and is rapidly ubiquitinated and degraded by the proteasome in the nucleus. As to expression, broadly expressed, including many cells in the head. Expressed in the intestine.

Its subcellular location is the nucleus. It is found in the endoplasmic reticulum membrane. Its function is as follows. Transcription factor involved in maintaining normal fat levels. Regulates the expression of genes involved in lipid metabolism in response to nutrient availability, such as the fatty-acid desaturases fat-5, fat-6 and fat-7. In response to a high-glucose diet, promotes fatty acid synthesis, elongation and desaturation, acting in concert with transcription factor mxl-3. Plays a role in synthesis of monomethyl branched-chain fatty acids (mmBCFAs) as well as other very-long-chain fatty acids. Downstream of the cis-Golgi membrane protein eas-1/GOLT1B and the E3 ubiquitin ligase rnf-145/RNF145, plays a role in the regulation of glial size, perhaps by modulating synthesis of long-chain polyunsaturated fatty-acids (LC-PUFA). Modulates expression of genes in the one-carbon cycle, which produces the methyl donor S-adenosylmethionine (SAM). Probably involved in a feedback loop in which decreased levels of SAM lead to increased transcriptional activity of sbp-1, thereby causing lipid accumulation. Involved in the negative regulation of zinc homeostasis. Involved in the response to simulated microgravity, in concert with Mediator complex subunit mdt-15, probably acting in the intestine. Plays a role in transgenerational lipid accumulation in response to a high-fat diet, probably acting by upregulating wdr-5.1 expression to increase the level of trimethylated 'Lys-4' histone H3 (H3K4me3), which may then induce the expression of fat-5, fat-6 and fat-7. May act as an oxygen sensor for lipid metabolism. Functionally, precursor of the transcription factor form, which is embedded in the endoplasmic reticulum membrane. Processing of this form allows release of the transcription factor form that translocates into the nucleus and activates transcription of genes involved in sterol biosynthesis and lipid homeostasis. Key transcription factor that regulates expression of genes involved in sterol biosynthesis and lipid homeostasis. In Caenorhabditis elegans, this protein is Sterol regulatory element binding protein sbp-1.